We begin with the raw amino-acid sequence, 431 residues long: Dihydroorotase (431 aa).

Zn(2+)-binding residues include His-55 and His-57. Substrate contacts are provided by residues 57–59 (HFR) and Asn-89. Positions 139, 169, 223, and 290 each coordinate Zn(2+). Residue Lys-139 is modified to N6-carboxylysine. Residue Asp-290 is part of the active site. Substrate is bound by residues His-294 and 308–309 (PG).

The protein belongs to the metallo-dependent hydrolases superfamily. DHOase family. Class I DHOase subfamily. Zn(2+) is required as a cofactor.

It catalyses the reaction (S)-dihydroorotate + H2O = N-carbamoyl-L-aspartate + H(+). It functions in the pathway pyrimidine metabolism; UMP biosynthesis via de novo pathway; (S)-dihydroorotate from bicarbonate: step 3/3. Catalyzes the reversible cyclization of carbamoyl aspartate to dihydroorotate. This chain is Dihydroorotase, found in Methanothermobacter thermautotrophicus (strain ATCC 29096 / DSM 1053 / JCM 10044 / NBRC 100330 / Delta H) (Methanobacterium thermoautotrophicum).